Reading from the N-terminus, the 372-residue chain is Tetraacyldisaccharide 4'-kinase (372 aa).

An ATP-binding site is contributed by 65–72; it reads TVGGTGKT. The segment at 351–372 is disordered; it reads QSTATGMADGLDKEHQDGQPAA. Positions 360–372 are enriched in basic and acidic residues; the sequence is GLDKEHQDGQPAA.

This sequence belongs to the LpxK family.

It carries out the reaction a lipid A disaccharide + ATP = a lipid IVA + ADP + H(+). The protein operates within glycolipid biosynthesis; lipid IV(A) biosynthesis; lipid IV(A) from (3R)-3-hydroxytetradecanoyl-[acyl-carrier-protein] and UDP-N-acetyl-alpha-D-glucosamine: step 6/6. Functionally, transfers the gamma-phosphate of ATP to the 4'-position of a tetraacyldisaccharide 1-phosphate intermediate (termed DS-1-P) to form tetraacyldisaccharide 1,4'-bis-phosphate (lipid IVA). The sequence is that of Tetraacyldisaccharide 4'-kinase from Cupriavidus metallidurans (strain ATCC 43123 / DSM 2839 / NBRC 102507 / CH34) (Ralstonia metallidurans).